A 430-amino-acid chain; its full sequence is uncharacterized protein (430 aa).

The next 12 membrane-spanning stretches (helical) occupy residues 36–56 (LFVVSISQIFGGAGLAAGVTV), 69–89 (AFAGLPSALFTLGSAGSALIV), 100–122 (TGLSAGFMIGGLGAIGVIMAAII), 126–148 (FLLFISLLIYGAGTATNLQARYA), 160–180 (TAVSITMVFTTFGAVAGPSLV), 197–217 (GPFILAAAAYMLAGVVLFIML), 253–273 (IIVGATVMVLTQIVMVAIMTM), 285–305 (LGAVGLVIGFHIGAMYLPSLV), 317–337 (AMAISSGTTLLLAGVIAAFAP), 340–360 (SMILLVIALSLLGLGWNFGLI), 384–404 (VLIALSGAAGGALSGMIVAGS), and 406–426 (YLALSLIGGILSLLLIPVVVW).

It belongs to the major facilitator superfamily.

It localises to the cell membrane. This is an uncharacterized protein from Bacillus subtilis (strain 168).